The chain runs to 79 residues: Putative defensin-like protein 203 (79 aa).

Positions 1 to 27 (MAKLIVNFSALLMIILLVSNGLPKAVA) are cleaved as a signal peptide. 4 cysteine pairs are disulfide-bonded: Cys-30-Cys-79, Cys-40-Cys-64, Cys-49-Cys-73, and Cys-53-Cys-75.

The protein belongs to the DEFL family.

The protein resides in the secreted. The polypeptide is Putative defensin-like protein 203 (Arabidopsis thaliana (Mouse-ear cress)).